A 265-amino-acid chain; its full sequence is Hydroxyethylthiazole kinase (265 aa).

Position 55 (methionine 55) interacts with substrate. Residues arginine 130 and serine 176 each contribute to the ATP site. Glycine 203 is a substrate binding site.

It belongs to the Thz kinase family. Mg(2+) serves as cofactor.

It carries out the reaction 5-(2-hydroxyethyl)-4-methylthiazole + ATP = 4-methyl-5-(2-phosphooxyethyl)-thiazole + ADP + H(+). It functions in the pathway cofactor biosynthesis; thiamine diphosphate biosynthesis; 4-methyl-5-(2-phosphoethyl)-thiazole from 5-(2-hydroxyethyl)-4-methylthiazole: step 1/1. Functionally, catalyzes the phosphorylation of the hydroxyl group of 4-methyl-5-beta-hydroxyethylthiazole (THZ). In Leptospira interrogans serogroup Icterohaemorrhagiae serovar Lai (strain 56601), this protein is Hydroxyethylthiazole kinase.